The sequence spans 142 residues: MQIKIIKLKEKAIIPKYEHDNDSGLDLVSTETVEIPSGESKLVKTGISIELPPNTEAQIRPRSGLALKHQITVLNTPGTIDEGYRGEIGVILINHGKRSFKVTEGMRIAQMVIAPVIRVKIQEVEQLSDTIRGQGGFGSTGV.

Residues 62-64 (RSG), asparagine 75, and 79-81 (TID) each bind substrate.

Belongs to the dUTPase family. Mg(2+) serves as cofactor.

The catalysed reaction is dUTP + H2O = dUMP + diphosphate + H(+). It functions in the pathway pyrimidine metabolism; dUMP biosynthesis; dUMP from dCTP (dUTP route): step 2/2. In terms of biological role, this enzyme is involved in nucleotide metabolism: it produces dUMP, the immediate precursor of thymidine nucleotides and it decreases the intracellular concentration of dUTP so that uracil cannot be incorporated into DNA. In Crocosphaera subtropica (strain ATCC 51142 / BH68) (Cyanothece sp. (strain ATCC 51142)), this protein is Deoxyuridine 5'-triphosphate nucleotidohydrolase.